The primary structure comprises 289 residues: Carbonyl reductase [NADPH] 1 (289 aa).

S2 is subject to N-acetylserine. Phosphoserine is present on S2. NADP(+) is bound by residues 10–34 (VTGANKGIGFAIVRDLCRQFAGDVV), 63–64 (DI), and N90. Residues 95–97 (FQL) and Q106 contribute to the glutathione site. A substrate-binding site is contributed by S140. 193–194 (TY) serves as a coordination point for glutathione. The active-site Proton acceptor is Y194. NADP(+)-binding positions include 194–198 (YGVTK) and 231–233 (VRT). K239 bears the N6-1-carboxyethyl lysine mark.

Belongs to the short-chain dehydrogenases/reductases (SDR) family. Monomer. As to expression, expressed in kidney (at protein level).

The protein localises to the cytoplasm. It carries out the reaction a secondary alcohol + NADP(+) = a ketone + NADPH + H(+). The enzyme catalyses prostaglandin E1 + NADP(+) = 15-oxoprostaglandin E1 + NADPH + H(+). It catalyses the reaction prostaglandin F2alpha + NADP(+) = prostaglandin E2 + NADPH + H(+). The catalysed reaction is prostaglandin D2 + NADP(+) = 15-oxoprostaglandin D2 + NADPH + H(+). It carries out the reaction prostaglandin E2 + NADP(+) = 15-oxoprostaglandin E2 + NADPH + H(+). The enzyme catalyses prostaglandin F2alpha + NADP(+) = 15-oxoprostaglandin F2alpha + NADPH + H(+). It catalyses the reaction menadione + NADPH + H(+) = menadiol + NADP(+). The catalysed reaction is daunorubicin + NADPH + H(+) = 13-dihydrodaunorubicin + NADP(+). It carries out the reaction S-nitrosoglutathione + NADPH + H(+) = S-(hydroxysulfenamide)glutathione + NADP(+). The enzyme catalyses a primary alcohol + NADP(+) = an aldehyde + NADPH + H(+). It catalyses the reaction cortisol + NADPH + H(+) = 20beta-dihydrocortisol + NADP(+). The catalysed reaction is corticosterone + NADPH + H(+) = 20beta-dihydrocorticosterone + NADP(+). NADPH-dependent reductase with broad substrate specificity. Catalyzes the reduction of a wide variety of carbonyl compounds including quinones, prostaglandins, menadione, plus various xenobiotics. Catalyzes the reduction of the antitumor anthracyclines doxorubicin and daunorubicin to the cardiotoxic compounds doxorubicinol and daunorubicinol. Can convert prostaglandin E2 to prostaglandin F2-alpha. Can bind glutathione, which explains its higher affinity for glutathione-conjugated substrates. Catalyzes the reduction of S-nitrosoglutathione. In addition, participates in the glucocorticoid metabolism by catalyzing the NADPH-dependent cortisol/corticosterone into 20beta-dihydrocortisol (20b-DHF) or 20beta-corticosterone (20b-DHB), which are weak agonists of NR3C1 and NR3C2 in adipose tissue. This is Carbonyl reductase [NADPH] 1 from Sus scrofa (Pig).